Consider the following 218-residue polypeptide: Glutathione S-transferase U22 (218 aa).

At Ala2 the chain carries N-acetylalanine. Residues 3–82 (DEVILLDFWP…YIDEVWSDKN (80 aa)) enclose the GST N-terminal domain. Glutathione-binding positions include 13 to 14 (SP), 39 to 40 (DK), 53 to 54 (KI), and 66 to 67 (ES). In terms of domain architecture, GST C-terminal spans 88-208 (DPYQRAQARF…LHDSEKILAF (121 aa)). Thr149 is modified (phosphothreonine).

This sequence belongs to the GST superfamily. Tau family.

It localises to the cytoplasm. The protein resides in the cytosol. It carries out the reaction RX + glutathione = an S-substituted glutathione + a halide anion + H(+). Functionally, may be involved in the conjugation of reduced glutathione to a wide number of exogenous and endogenous hydrophobic electrophiles and have a detoxification role against certain herbicides. The polypeptide is Glutathione S-transferase U22 (GSTU22) (Arabidopsis thaliana (Mouse-ear cress)).